Here is an 846-residue protein sequence, read N- to C-terminus: uncharacterized protein (846 aa).

Disordered regions lie at residues 159–217, 254–276, 332–414, 459–501, 556–651, and 803–846; these read VPTF…INHI, CNLN…SNSN, NKLN…PLSI, GSSI…SNSL, QQQQ…NFND, and TTTT…NKNK. The span at 163–217 shows a compositional bias: low complexity; sequence HNQNQNNNNQNNNQNNNNNNNNNNNNNNNNNNNNNNNSQNNNNNQNNNNNHINHI. Residues 355-414 are compositionally biased toward low complexity; the sequence is LQSPNSQSLANSSANISSNALNQSSSSQQQQPQSTSQQQQQQHKMNSSSGNISPPLPLSI. Polar residues predominate over residues 459 to 482; that stretch reads GSSITPKNLSPLSSSAPNTPKQFA. Low complexity-rich tracts occupy residues 483 to 501, 568 to 642, and 811 to 846; these read SLSS…SNSL, QQQQ…QPNN, and NNNN…NKNK.

This is an uncharacterized protein from Dictyostelium discoideum (Social amoeba).